A 204-amino-acid polypeptide reads, in one-letter code: Imidazoleglycerol-phosphate dehydratase (204 aa).

It belongs to the imidazoleglycerol-phosphate dehydratase family.

The protein resides in the cytoplasm. It carries out the reaction D-erythro-1-(imidazol-4-yl)glycerol 3-phosphate = 3-(imidazol-4-yl)-2-oxopropyl phosphate + H2O. Its pathway is amino-acid biosynthesis; L-histidine biosynthesis; L-histidine from 5-phospho-alpha-D-ribose 1-diphosphate: step 6/9. The chain is Imidazoleglycerol-phosphate dehydratase from Corynebacterium urealyticum (strain ATCC 43042 / DSM 7109).